The chain runs to 188 residues: Phosphoribosylglycinamide formyltransferase (188 aa).

Residue 12-14 (GSN) participates in N(1)-(5-phospho-beta-D-ribosyl)glycinamide binding. (6R)-10-formyltetrahydrofolate is bound by residues K66, 91–94 (MRLI), and N108. H110 (proton donor) is an active-site residue.

The protein belongs to the GART family.

The enzyme catalyses N(1)-(5-phospho-beta-D-ribosyl)glycinamide + (6R)-10-formyltetrahydrofolate = N(2)-formyl-N(1)-(5-phospho-beta-D-ribosyl)glycinamide + (6S)-5,6,7,8-tetrahydrofolate + H(+). It participates in purine metabolism; IMP biosynthesis via de novo pathway; N(2)-formyl-N(1)-(5-phospho-D-ribosyl)glycinamide from N(1)-(5-phospho-D-ribosyl)glycinamide (10-formyl THF route): step 1/1. Functionally, catalyzes the transfer of a formyl group from 10-formyltetrahydrofolate to 5-phospho-ribosyl-glycinamide (GAR), producing 5-phospho-ribosyl-N-formylglycinamide (FGAR) and tetrahydrofolate. The protein is Phosphoribosylglycinamide formyltransferase of Staphylococcus aureus (strain Mu50 / ATCC 700699).